The sequence spans 68 residues: Protein transport protein Sec61 gamma-2 subunit (68 aa).

Topologically, residues 1–32 are cytoplasmic; sequence MDKVVKFAEPGRAFAKDSIRLVKRCTKPDRKE. A helical membrane pass occupies residues 33–61; sequence FQKIAIATAVGFCIMGFIGFFVKLIHIPI. Topologically, residues 62 to 68 are extracellular; sequence NNIIVGS.

The protein belongs to the SecE/SEC61-gamma family. Heterotrimeric complex composed of SEC61-alpha, SEC61-beta and SEC61-gamma.

It localises to the endoplasmic reticulum membrane. Functionally, necessary for protein translocation in the endoplasmic reticulum. In Drosophila melanogaster (Fruit fly), this protein is Protein transport protein Sec61 gamma-2 subunit (Sec61gamma).